We begin with the raw amino-acid sequence, 133 residues long: Small ribosomal subunit protein uS8 (133 aa).

It belongs to the universal ribosomal protein uS8 family. Part of the 30S ribosomal subunit. Contacts proteins S5 and S12.

Functionally, one of the primary rRNA binding proteins, it binds directly to 16S rRNA central domain where it helps coordinate assembly of the platform of the 30S subunit. The polypeptide is Small ribosomal subunit protein uS8 (Anaplasma phagocytophilum (strain HZ)).